We begin with the raw amino-acid sequence, 220 residues long: UPF0502 protein Pnap_3223 (220 aa).

This sequence belongs to the UPF0502 family.

The sequence is that of UPF0502 protein Pnap_3223 from Polaromonas naphthalenivorans (strain CJ2).